A 927-amino-acid chain; its full sequence is Nuclear factor of activated T-cells, cytoplasmic 2 (927 aa).

A disordered region spans residues 1–29 (MDVPEPQPDPDGGDGPGHEPGGSPQDELD). Phosphoserine is present on residues Ser23, Ser53, Ser54, Ser56, Ser99, Ser107, and Ser110. The tract at residues 111–116 (PRIEIT) is calcineurin-binding. Residues 119–201 (HELMQAGGAL…CVSPNNAGPD (83 aa)) form a transactivation domain A (TAD-A) region. 9 positions are modified to phosphoserine: Ser136, Ser150, Ser170, Ser173, Ser174, Ser176, Ser177, Ser179, and Ser182. The required for cytoplasmic retention of the phosphorylated form stretch occupies residues 163–177 (YREPLCLSPASSGSS). A run of 2 repeats spans residues 186–202 (SPYT…GPDD) and 215–231 (SPRT…LAED). The 3 X approximate SP repeats stretch occupies residues 186-292 (SPYTSPCVSP…PHVALQDDSI (107 aa)). Disordered regions lie at residues 203-299 (LCPQ…YPPT) and 322-341 (SKIW…PSKA). 5 positions are modified to phosphoserine: Ser215, Ser219, Ser223, Ser238, and Ser245. The span at 216-226 (PRTSPIMSPRT) shows a compositional bias: polar residues. The short motif at 253 to 255 (KRR) is the Nuclear localization signal element. 7 positions are modified to phosphoserine: Ser257, Ser270, Ser276, Ser278, Ser282, Ser328, and Ser365. The span at 267–277 (PAASPQRSRSP) shows a compositional bias: low complexity. One copy of the 3; approximate repeat lies at 274 to 290 (SRSPSPQPSPHVALQDD). In terms of domain architecture, RHD spans 394–576 (ASLPPLEWPL…NPIECSQRSA (183 aa)). The DNA-binding element occupies 423 to 430 (RAHYETEG). Residues Ser757, Ser759, and Ser761 each carry the phosphoserine modification. Disordered regions lie at residues 790–812 (AGSQ…QQAS) and 841–903 (FGPS…QNLD). Residues 798–812 (GSTLPHTSSASQQAS) show a composition bias toward polar residues. Ser860 carries the phosphoserine modification.

As to quaternary structure, member of the multicomponent NFATC transcription complex that consists of at least two components, a pre-existing cytoplasmic component NFATC2 and an inducible nuclear component NFATC1. Other members such as NFATC4, NFATC3 or members of the activating protein-1 family, MAF, GATA4 and Cbp/p300 can also bind the complex. The phosphorylated form specifically interacts with XPO1; which mediates nuclear export. NFATC proteins bind to DNA as monomers. Interacts with NFATC2IP. Interacts with FOXP3. Interacts with TBX21 ('Thr-302' phosphorylated form). Interacts with KAT2A. Interacts with HOMER2 and HOMER3; this interaction competes with calcineurin/PPP3CA-binding and hence prevents NFATC2 dephosphorylation and activation. Interacts with protein phosphatase PPP3CA/calcineurin A. Interacts with AKAP5 (via leucine zipper domain); this is required for NFATC2/NFAT1 recruitment to CRAC channels. Post-translationally, in resting cells, phosphorylated by NFATC-kinase on at least 18 sites in the 99-365 region. Upon cell stimulation, all these sites except Ser-245 are dephosphorylated by calcineurin. Dephosphorylation induces a conformational change that simultaneously exposes an NLS and masks an NES, which results in nuclear localization. Simultaneously, one site among Ser-53; Ser-54 and Ser-56 is phosphorylated; which is required for full transcriptional activity. In terms of processing, ubiquitinated in endothelial cells by RNF213 downstream of the non-canonical Wnt signaling pathway, leading to its degradation by the proteasome. Expressed in spleen, heart, testis, brain, placenta, muscle and pancreas. Expressed in the thymus. Expressed in the lung. Expressed in cartilage.

It localises to the cytoplasm. It is found in the nucleus. Its function is as follows. Plays a role in the inducible expression of cytokine genes in T cells, especially in the induction of the IL-2, IL-3, IL-4, TNF-alpha or GM-CSF. Promotes invasive migration through the activation of GPC6 expression and WNT5A signaling pathway. Is involved in the negative regulation of chondrogenesis. Recruited by AKAP5 to ORAI1 pore-forming subunit of CRAC channels in Ca(2+) signaling microdomains where store-operated Ca(2+) influx is coupled to calmodulin and calcineurin signaling and activation of NFAT-dependent transcriptional responses. The polypeptide is Nuclear factor of activated T-cells, cytoplasmic 2 (Nfatc2) (Mus musculus (Mouse)).